We begin with the raw amino-acid sequence, 197 residues long: Pyridoxal 5'-phosphate synthase subunit PdxT (197 aa).

Gly53–Ser55 provides a ligand contact to L-glutamine. The active-site Nucleophile is Cys85. L-glutamine-binding positions include Arg114 and Ile142–Arg143. Active-site charge relay system residues include His179 and Glu181.

This sequence belongs to the glutaminase PdxT/SNO family. As to quaternary structure, in the presence of PdxS, forms a dodecamer of heterodimers. Only shows activity in the heterodimer.

The enzyme catalyses aldehydo-D-ribose 5-phosphate + D-glyceraldehyde 3-phosphate + L-glutamine = pyridoxal 5'-phosphate + L-glutamate + phosphate + 3 H2O + H(+). The catalysed reaction is L-glutamine + H2O = L-glutamate + NH4(+). It functions in the pathway cofactor biosynthesis; pyridoxal 5'-phosphate biosynthesis. Its function is as follows. Catalyzes the hydrolysis of glutamine to glutamate and ammonia as part of the biosynthesis of pyridoxal 5'-phosphate. The resulting ammonia molecule is channeled to the active site of PdxS. The chain is Pyridoxal 5'-phosphate synthase subunit PdxT from Pyrococcus furiosus (strain ATCC 43587 / DSM 3638 / JCM 8422 / Vc1).